A 242-amino-acid polypeptide reads, in one-letter code: Carboxy-S-adenosyl-L-methionine synthase (242 aa).

S-adenosyl-L-methionine is bound by residues Tyr39, 64–66, 89–90, 117–118, Asn132, and Arg199; these read GCS, DN, and DI.

It belongs to the class I-like SAM-binding methyltransferase superfamily. Cx-SAM synthase family. As to quaternary structure, homodimer.

It carries out the reaction prephenate + S-adenosyl-L-methionine = carboxy-S-adenosyl-L-methionine + 3-phenylpyruvate + H2O. Catalyzes the conversion of S-adenosyl-L-methionine (SAM) to carboxy-S-adenosyl-L-methionine (Cx-SAM). The polypeptide is Carboxy-S-adenosyl-L-methionine synthase (Aliivibrio salmonicida (strain LFI1238) (Vibrio salmonicida (strain LFI1238))).